A 554-amino-acid polypeptide reads, in one-letter code: Neutral amino acid transporter 9 (554 aa).

The Cytoplasmic segment spans residues 1–112 (MDSDQTPLIN…GSDGTGKNSS (112 aa)). Residues 113 to 133 (IVTIFMIWNTMMGTSILSIPW) form a helical membrane-spanning segment. An important for arginine binding and amino acid transport region spans residues 122–127 (TMMGTS). Residue serine 127 participates in arginine binding. The Lumenal portion of the chain corresponds to 134–139 (GIKQAG). The helical transmembrane segment at 140–160 (FTTGVCILFLMGILTLYCCYR) threads the bilayer. Residues 161–191 (VVKSRGTIPLTDTSNWEFPDVCQYYFGSFGR) lie on the Cytoplasmic side of the membrane. A helical transmembrane segment spans residues 192-218 (WSSLLFSLVSLIGAMIVYWVLMSNFLF). Residues 219–276 (NTGKFIYNYVNDVNVTDDVLSNNGSDKVICPNPDSTRPLNKSMDTYFGNGTNYEQFET) are Lumenal-facing. 4 N-linked (GlcNAc...) asparagine glycosylation sites follow: asparagine 232, asparagine 241, asparagine 258, and asparagine 267. Residues cysteine 248 and cysteine 417 are joined by a disulfide bond. A helical transmembrane segment spans residues 277–293 (WWSKTNTVPFYLVVLLL). The Cytoplasmic portion of the chain corresponds to 294-302 (PLLSFRSPS). The chain crosses the membrane as a helical span at residues 303–327 (FFAKFNILGTVSIIYLVSLVTLKAA). Over 328-349 (HLGFHLRFSWNQVQEFFVPEFR) the chain is Lumenal. Residues 350 to 370 (LSFPQLTGILTLAFFIHNCII) form a helical membrane-spanning segment. The Cytoplasmic segment spans residues 371–387 (TLLKNNRNQKNNVRDLS). A helical transmembrane segment spans residues 388–408 (IAYLLVGLTYIYVGVAVFASF). Residues 409-430 (PSPPLSKQCIQQNFLDNFPSSD) are Lumenal-facing. The chain crosses the membrane as a helical span at residues 431 to 451 (ILAFVARIFLLFQMMTVYPLL). The CARC motif signature appears at 437 to 447 (RIFLLFQMMTV). Residues 450–456 (LLGYLVR) carry the CRAC motif motif. The Cytoplasmic portion of the chain corresponds to 452 to 472 (GYLVRVQLLGHIFGDIYPSVF). Residues 473–493 (HVLALNIAVVGVGVIMARFYP) form a helical membrane-spanning segment. Topologically, residues 494–500 (NIGGIIR) are lumenal. Residues 501–521 (FSGAACGLAFVFVYPSLIHMI) traverse the membrane as a helical segment. Residues 522–533 (SLHRRGQLKVHS) are Cytoplasmic-facing. Residues 534-554 (ILIHVSIIVLGIANLIAQFFM) form a helical membrane-spanning segment.

This sequence belongs to the amino acid/polyamine transporter 2 family. SLC38A9 subfamily. As to quaternary structure, associated component of the Ragulator complex. Associated component of the Rag GTPases heterodimers. Glycosylated.

The protein localises to the lysosome membrane. It is found in the late endosome membrane. It catalyses the reaction L-leucine(in) = L-leucine(out). It carries out the reaction L-tyrosine(in) = L-tyrosine(out). The enzyme catalyses L-glutamine(out) = L-glutamine(in). The catalysed reaction is L-asparagine(out) = L-asparagine(in). Functionally, lysosomal amino acid transporter involved in the activation of mTORC1 in response to amino acid levels. Probably acts as an amino acid sensor of the Rag GTPases and Ragulator complexes, 2 complexes involved in amino acid sensing and activation of mTORC1, a signaling complex promoting cell growth in response to growth factors, energy levels, and amino acids. Following activation by amino acids, the Ragulator and Rag GTPases function as a scaffold recruiting mTORC1 to lysosomes where it is in turn activated. SLC38A9 mediates transport of amino acids with low capacity and specificity with a slight preference for polar amino acids. Acts as an arginine sensor. Following activation by arginine binding, mediates transport of L-glutamine, leucine and tyrosine with high efficiency, and is required for the efficient utilization of these amino acids after lysosomal protein degradation. However, the transport mechanism is not well defined and the role of sodium is not clear. Guanine exchange factor (GEF) that, upon arginine binding, stimulates GDP release from RRAGA and therefore activates the Rag GTPase heterodimer and the mTORC1 pathway in response to nutrient sufficiency. In Xenopus tropicalis (Western clawed frog), this protein is Neutral amino acid transporter 9.